The primary structure comprises 430 residues: RNA polymerase-associated protein LEO1 (430 aa).

Residues 1 to 10 (MSSSEGNSDA) show a composition bias toward polar residues. Positions 1-128 (MSSSEGNSDA…SRGSLNDLQG (128 aa)) are disordered. Positions 18 to 30 (KSSTPSSRGSSPD) are enriched in low complexity. A compositionally biased stretch (basic and acidic residues) spans 99-119 (REGKPKESNTRARLSDSDAES). Coiled coils occupy residues 326 to 347 (TRRENARKEEESLRAHIRRTQM) and 409 to 429 (EEYRKRKQQQKKQIVTSDEES). Residues 349-430 (RNNFKVRGPR…QIVTSDEESD (82 aa)) are disordered.

This sequence belongs to the LEO1 family. Component of the PAF1 complex which consists of at least cdc-73, ctr-9, leo-1, pafo-1 and rtfo-1.

The protein localises to the nucleus. The protein resides in the cytoplasm. In terms of biological role, component of the PAF1 complex which is a multifunctional complex involved in transcription initiation via genetic interactions with TATA-binding proteins, elongation and transcription-coupled histone modification. The sequence is that of RNA polymerase-associated protein LEO1 from Caenorhabditis elegans.